Consider the following 773-residue polypeptide: Protein YhgF (773 aa).

One can recognise an S1 motif domain in the interval 651–720 (GMILEGAVTN…QRKRIALTMR (70 aa)). The tract at residues 721-773 (LDEQPGETNARRGGGNERPQNNRPAAKPRGREAQPAGNSAMMDALAAAMGKKR) is disordered.

The chain is Protein YhgF (yhgF) from Escherichia coli (strain K12).